Reading from the N-terminus, the 262-residue chain is Type III pantothenate kinase (262 aa).

9 to 16 (DIGNTNVK) lines the ATP pocket. Substrate contacts are provided by residues tyrosine 103 and 110 to 113 (GADR). The active-site Proton acceptor is the aspartate 112. Aspartate 134 is a binding site for K(+). Threonine 137 contributes to the ATP binding site. Threonine 190 serves as a coordination point for substrate.

This sequence belongs to the type III pantothenate kinase family. As to quaternary structure, homodimer. It depends on NH4(+) as a cofactor. Requires K(+) as cofactor.

It localises to the cytoplasm. The enzyme catalyses (R)-pantothenate + ATP = (R)-4'-phosphopantothenate + ADP + H(+). The protein operates within cofactor biosynthesis; coenzyme A biosynthesis; CoA from (R)-pantothenate: step 1/5. In terms of biological role, catalyzes the phosphorylation of pantothenate (Pan), the first step in CoA biosynthesis. This chain is Type III pantothenate kinase, found in Nitratidesulfovibrio vulgaris (strain DSM 19637 / Miyazaki F) (Desulfovibrio vulgaris).